The chain runs to 394 residues: Elongation factor Tu (394 aa).

A tr-type G domain is found at 10-204 (KPHVNVGTIG…HLDTYIPEPE (195 aa)). Residues 19–26 (GHVDHGKT) form a G1 region. 19–26 (GHVDHGKT) serves as a coordination point for GTP. Thr26 is a Mg(2+) binding site. A G2 region spans residues 60 to 64 (GITIN). Residues 81-84 (DCPG) form a G3 region. GTP contacts are provided by residues 81-85 (DCPGH) and 136-139 (NKCD). A G4 region spans residues 136–139 (NKCD). The tract at residues 174-176 (SAL) is G5.

It belongs to the TRAFAC class translation factor GTPase superfamily. Classic translation factor GTPase family. EF-Tu/EF-1A subfamily. In terms of assembly, monomer.

The protein localises to the cytoplasm. It catalyses the reaction GTP + H2O = GDP + phosphate + H(+). Its function is as follows. GTP hydrolase that promotes the GTP-dependent binding of aminoacyl-tRNA to the A-site of ribosomes during protein biosynthesis. In Aeromonas salmonicida (strain A449), this protein is Elongation factor Tu.